A 155-amino-acid polypeptide reads, in one-letter code: 3-dehydroquinate dehydratase (155 aa).

The Proton acceptor role is filled by Y22. Substrate contacts are provided by N73, H79, and D86. H99 functions as the Proton donor in the catalytic mechanism. Substrate-binding positions include I100–S101 and R110.

The protein belongs to the type-II 3-dehydroquinase family. As to quaternary structure, homododecamer.

It catalyses the reaction 3-dehydroquinate = 3-dehydroshikimate + H2O. The protein operates within metabolic intermediate biosynthesis; chorismate biosynthesis; chorismate from D-erythrose 4-phosphate and phosphoenolpyruvate: step 3/7. In terms of biological role, catalyzes a trans-dehydration via an enolate intermediate. In Campylobacter hominis (strain ATCC BAA-381 / DSM 21671 / CCUG 45161 / LMG 19568 / NCTC 13146 / CH001A), this protein is 3-dehydroquinate dehydratase.